The primary structure comprises 237 residues: Uridylate kinase (237 aa).

Residue 11 to 14 (KLSG) coordinates ATP. The segment at 18–23 (GGGGIG) is involved in allosteric activation by GTP. UMP is bound at residue Gly-52. Gly-53 and Arg-57 together coordinate ATP. Residues Asp-72 and 133-140 (SGMPYFST) each bind UMP. The ATP site is built by Gln-161, Tyr-167, and Asp-170.

The protein belongs to the UMP kinase family. Homohexamer.

The protein localises to the cytoplasm. It catalyses the reaction UMP + ATP = UDP + ADP. The protein operates within pyrimidine metabolism; CTP biosynthesis via de novo pathway; UDP from UMP (UMPK route): step 1/1. Its activity is regulated as follows. Allosterically activated by GTP. Inhibited by UTP. Its function is as follows. Catalyzes the reversible phosphorylation of UMP to UDP. This Cutibacterium acnes (strain DSM 16379 / KPA171202) (Propionibacterium acnes) protein is Uridylate kinase.